The following is a 209-amino-acid chain: Guanylate kinase (209 aa).

The region spanning 5–184 is the Guanylate kinase-like domain; it reads GLLIVFSGPS…AAERVKRVIE (180 aa). 12–19 serves as a coordination point for ATP; it reads GPSGVGKG.

The protein belongs to the guanylate kinase family.

Its subcellular location is the cytoplasm. The catalysed reaction is GMP + ATP = GDP + ADP. In terms of biological role, essential for recycling GMP and indirectly, cGMP. The sequence is that of Guanylate kinase from Streptococcus agalactiae serotype Ia (strain ATCC 27591 / A909 / CDC SS700).